Consider the following 313-residue polypeptide: 4-diphosphocytidyl-2-C-methyl-D-erythritol kinase (313 aa).

The active site involves lysine 29. Position 113–123 (113–123) interacts with ATP; it reads PMGGGVGGGSS. Residue aspartate 155 is part of the active site.

This sequence belongs to the GHMP kinase family. IspE subfamily.

The catalysed reaction is 4-CDP-2-C-methyl-D-erythritol + ATP = 4-CDP-2-C-methyl-D-erythritol 2-phosphate + ADP + H(+). Its pathway is isoprenoid biosynthesis; isopentenyl diphosphate biosynthesis via DXP pathway; isopentenyl diphosphate from 1-deoxy-D-xylulose 5-phosphate: step 3/6. Catalyzes the phosphorylation of the position 2 hydroxy group of 4-diphosphocytidyl-2C-methyl-D-erythritol. In Haemophilus influenzae (strain 86-028NP), this protein is 4-diphosphocytidyl-2-C-methyl-D-erythritol kinase.